Reading from the N-terminus, the 424-residue chain is Carbohydrate sulfotransferase 8 (424 aa).

Over 1–10 (MTLRPGTMRL) the chain is Cytoplasmic. Residues 11-31 (ACMFSSILLFGAAGLLLFISL) traverse the membrane as a helical; Signal-anchor for type II membrane protein segment. Residues 32 to 424 (QDPTELAPQQ…NYSKPFADLY (393 aa)) are Lumenal-facing. The interval 47–107 (FNIRPRQPHH…PLQRGTRLRL (61 aa)) is disordered. The segment covering 66 to 77 (GDLKEPTERVTR) has biased composition (basic and acidic residues). N-linked (GlcNAc...) asparagine glycosylation is present at Asn-128. Residues 198-204 (PKAGCSN) and 258-266 (REPFERLVS) each bind 3'-phosphoadenylyl sulfate. Asn-294, Asn-367, and Asn-415 each carry an N-linked (GlcNAc...) asparagine glycan.

The protein belongs to the sulfotransferase 2 family. In terms of tissue distribution, predominantly expressed in pituitary gland. In brain, it is expressed in pituitary gland, cerebellum, medulla oblongata, pons, thalamus and spinal cord. Expressed in the epidermis. Expressed at lower level in lung, spleen, adrenal gland, placenta, prostate, testis, mammary gland and trachea.

The protein resides in the golgi apparatus membrane. In terms of biological role, catalyzes the transfer of sulfate to position 4 of non-reducing N-acetylgalactosamine (GalNAc) residues in both N-glycans and O-glycans. Required for biosynthesis of glycoprotein hormones lutropin and thyrotropin, by mediating sulfation of their carbohydrate structures. Only active against terminal GalNAcbeta1,GalNAcbeta. Not active toward chondroitin. This Homo sapiens (Human) protein is Carbohydrate sulfotransferase 8 (CHST8).